Consider the following 527-residue polypeptide: Putative pumilio homolog 13 (527 aa).

The tract at residues 22 to 51 is disordered; that stretch reads ENMTTAASSSQSQPPQMQSSKFHQPENHIH. A compositionally biased stretch (low complexity) spans 24–41; the sequence is MTTAASSSQSQPPQMQSS. One can recognise a PUM-HD domain in the interval 184-527; it reads GVNNSWRSNE…GNKILEKLNI (344 aa). Pumilio repeat units follow at residues 205–243, 244–279, 283–321, 322–357, 358–396, 397–432, 433–468, and 469–503; these read SMEN…MIFD, GLIV…LIVD, RHIS…RIMD, AISS…RLLE, VVSQ…RLIS, EVIE…LLVN, KLLR…IVVD, and LLRG…MLRY.

The protein localises to the cytoplasm. In terms of biological role, sequence-specific RNA-binding protein that regulates translation and mRNA stability by binding the 3'-UTR of target mRNAs. In Arabidopsis thaliana (Mouse-ear cress), this protein is Putative pumilio homolog 13 (APUM13).